The following is a 236-amino-acid chain: E3 ubiquitin-protein ligase RNF187 (236 aa).

An RING-type zinc finger spans residues 12-53; that stretch reads CALCQRAPREPVRADCGHRFCRACVVRFWAEEDGPFPCPECA. Arg98 and Arg109 each carry asymmetric dimethylarginine; by PRMT1. Lys195 participates in a covalent cross-link: Glycyl lysine isopeptide (Lys-Gly) (interchain with G-Cter in ubiquitin). Position 200 is a phosphoserine (Ser200). Glycyl lysine isopeptide (Lys-Gly) (interchain with G-Cter in ubiquitin) cross-links involve residues Lys224 and Lys225.

In terms of assembly, homodimer. Interacts with JUN, independently of JUN phosphorylation. Interacts (via C-terminus) with TRIM7. Post-translationally, ubiquitinated; undergoes 'Lys-48'-linked autoubiquitination in the absence of growth factors and MAP3K1-induced 'Lys-63'-linked polyubiquitination. 'Lys-48'-autoubiquitination leads to degradation by the proteasome, while MAP3K1-induced 'Lys-63'-linked polyubiquitination results in the stabilization of the protein. 'Lys-48'- and 'Lys-63'-linked polyubiquitinations occur most probably on the same 3 C-terminal lysine residues (Lys-195, Lys-224 and Lys-225) and are thus mutually exclusive. Other sites of ubiquitination are not excluded. 'Lys-63'-linked polyubiquitination by TRIM7 in response to growth factor signaling via the MEK/ERK pathway enhances protein stability. Arginine methylation by PRMT1 stabilizes RNF187 by facilitating K63-linked ubiquitin chain formation, and enables dimerization, c-Jun interaction and subsequent AP1 target gene expression.

It is found in the cytoplasm. Its subcellular location is the nucleus. It carries out the reaction S-ubiquitinyl-[E2 ubiquitin-conjugating enzyme]-L-cysteine + [acceptor protein]-L-lysine = [E2 ubiquitin-conjugating enzyme]-L-cysteine + N(6)-ubiquitinyl-[acceptor protein]-L-lysine.. It participates in protein modification; protein ubiquitination. E3 ubiquitin-protein ligase that acts as a coactivator of JUN-mediated gene activation in response to growth factor signaling via the MAP3K1 pathway, independently from MAPK8. This is E3 ubiquitin-protein ligase RNF187 (Rnf187) from Mus musculus (Mouse).